A 209-amino-acid chain; its full sequence is Pyrrolidone-carboxylate peptidase (209 aa).

Catalysis depends on residues E79, C142, and H164.

The protein belongs to the peptidase C15 family. Homotetramer.

The protein localises to the cytoplasm. The enzyme catalyses Release of an N-terminal pyroglutamyl group from a polypeptide, the second amino acid generally not being Pro.. Removes 5-oxoproline from various penultimate amino acid residues except L-proline. This is Pyrrolidone-carboxylate peptidase from Saccharolobus islandicus (strain L.S.2.15 / Lassen #1) (Sulfolobus islandicus).